Here is an 84-residue protein sequence, read N- to C-terminus: MFTLKKPLLLIVLLGMISLSLCEQERNADEEEGSEIKRGIFSKLAGKKLKNLLISGLKNVGKEVGMDVVRTGIDIAGCKIKGEC.

The N-terminal stretch at 1–22 is a signal peptide; the sequence is MFTLKKPLLLIVLLGMISLSLC. The propeptide occupies 23-38; that stretch reads EQERNADEEEGSEIKR. A disulfide bond links C78 and C84.

This sequence belongs to the frog skin active peptide (FSAP) family. Brevinin subfamily. As to expression, expressed by the skin glands.

Its subcellular location is the secreted. Functionally, shows antibacterial activity against representative Gram-negative and Gram-positive bacterial species, and hemolytic activity. The sequence is that of Esculentin-1B from Pelophylax lessonae (Pool frog).